The following is a 155-amino-acid chain: Ribosome maturation factor RimP (155 aa).

It belongs to the RimP family.

It is found in the cytoplasm. In terms of biological role, required for maturation of 30S ribosomal subunits. This is Ribosome maturation factor RimP from Phocaeicola vulgatus (strain ATCC 8482 / DSM 1447 / JCM 5826 / CCUG 4940 / NBRC 14291 / NCTC 11154) (Bacteroides vulgatus).